We begin with the raw amino-acid sequence, 627 residues long: MSLDISKYPILALANTPDELRSLPKESLPALCDELRAYLLKSVSKSSGHLASGLGVVELTVALHYVYNTPFDQLIWDVGHQAYPHKILTGRREKLSTIRQKDGLHPFPWRDESEYDVLSVGHSSTSISAALGLAICAEKEQANRKVISVIGDGAITAGMAFEALNHAGDIHPDMLVVLNDNEMSISENVGALNNQLARVLSGSLYTSIREGGKKVLSGTPTIKELLKRTEEHIKGMVIPGTMFEELGFNYIGPVDGHDVNELVRTLKNMRNLKGPQFLHIMTKKGKGYEPAEKDPISYHGVPKFDPSNHSLPKSSGGKPTFSNIFGDFLCDMAKDDDKLMAITPAMREGSGMVRFSKEFPGQYFDTAIAEQHAVTLASGMAIAGYNPIVAIYSTFLQRGYDQLIHDVAIMNLPVMFAIDRAGLVGADGQTHQGAFDISFMRCIPNMVIMTPSDENECRQMLYTGHKHTGPSAVRYPRGSATGIEVNKEMQALEIGKGRLIRETKITEKGERVAILNFGTFLSNSVEAAEKLDATVADMRFAKPLDETLLCELVTSHDVLVTIEENAISGGAGSGVIEFLMKNRLIKPVLQLGLPDQFIAQGTQEEMHAELMLDATGIEKQIRDYLDL.

Residues His-80 and 121–123 contribute to the thiamine diphosphate site; that span reads GHS. Asp-152 contacts Mg(2+). Thiamine diphosphate-binding positions include 153 to 154, Asn-181, Tyr-288, and Glu-370; that span reads GA. Residue Asn-181 participates in Mg(2+) binding.

The protein belongs to the transketolase family. DXPS subfamily. Homodimer. It depends on Mg(2+) as a cofactor. The cofactor is thiamine diphosphate.

It carries out the reaction D-glyceraldehyde 3-phosphate + pyruvate + H(+) = 1-deoxy-D-xylulose 5-phosphate + CO2. It functions in the pathway metabolic intermediate biosynthesis; 1-deoxy-D-xylulose 5-phosphate biosynthesis; 1-deoxy-D-xylulose 5-phosphate from D-glyceraldehyde 3-phosphate and pyruvate: step 1/1. Catalyzes the acyloin condensation reaction between C atoms 2 and 3 of pyruvate and glyceraldehyde 3-phosphate to yield 1-deoxy-D-xylulose-5-phosphate (DXP). The protein is 1-deoxy-D-xylulose-5-phosphate synthase of Aliivibrio salmonicida (strain LFI1238) (Vibrio salmonicida (strain LFI1238)).